The chain runs to 707 residues: Methionine--tRNA ligase (707 aa).

Residues 13-23 (PYANGNFHIGH) carry the 'HIGH' region motif. Residues Cys-147, Cys-150, Cys-160, and Cys-163 each contribute to the Zn(2+) site. Residues 344 to 348 (KMSKS) carry the 'KMSKS' region motif. Residue Lys-347 coordinates ATP. Positions 601 to 707 (DFAKVDLRIA…PGATPGMRIH (107 aa)) constitute a tRNA-binding domain.

Belongs to the class-I aminoacyl-tRNA synthetase family. MetG type 1 subfamily. In terms of assembly, homodimer. The cofactor is Zn(2+).

The protein resides in the cytoplasm. It carries out the reaction tRNA(Met) + L-methionine + ATP = L-methionyl-tRNA(Met) + AMP + diphosphate. In terms of biological role, is required not only for elongation of protein synthesis but also for the initiation of all mRNA translation through initiator tRNA(fMet) aminoacylation. This is Methionine--tRNA ligase from Polaromonas naphthalenivorans (strain CJ2).